We begin with the raw amino-acid sequence, 467 residues long: Chromosomal replication initiator protein DnaA (467 aa).

Residues Met-1–Ala-90 form a domain I, interacts with DnaA modulators region. A domain II region spans residues Val-91–Ser-130. A compositionally biased stretch (low complexity) spans Pro-98–Pro-111. The interval Pro-98–Asn-119 is disordered. The tract at residues Asn-131–Ala-347 is domain III, AAA+ region. 4 residues coordinate ATP: Gly-175, Gly-177, Lys-178, and Thr-179. The domain IV, binds dsDNA stretch occupies residues Asn-348–Ser-467.

This sequence belongs to the DnaA family. In terms of assembly, oligomerizes as a right-handed, spiral filament on DNA at oriC.

It is found in the cytoplasm. Functionally, plays an essential role in the initiation and regulation of chromosomal replication. ATP-DnaA binds to the origin of replication (oriC) to initiate formation of the DNA replication initiation complex once per cell cycle. Binds the DnaA box (a 9 base pair repeat at the origin) and separates the double-stranded (ds)DNA. Forms a right-handed helical filament on oriC DNA; dsDNA binds to the exterior of the filament while single-stranded (ss)DNA is stabiized in the filament's interior. The ATP-DnaA-oriC complex binds and stabilizes one strand of the AT-rich DNA unwinding element (DUE), permitting loading of DNA polymerase. After initiation quickly degrades to an ADP-DnaA complex that is not apt for DNA replication. Binds acidic phospholipids. This is Chromosomal replication initiator protein DnaA from Shigella sonnei (strain Ss046).